The following is a 1025-amino-acid chain: Beta-galactosidase (1025 aa).

Glu-482 functions as the Proton donor in the catalytic mechanism. Glu-551 (nucleophile) is an active-site residue.

Belongs to the glycosyl hydrolase 2 family.

The catalysed reaction is Hydrolysis of terminal non-reducing beta-D-galactose residues in beta-D-galactosides.. In Kluyveromyces lactis (strain ATCC 8585 / CBS 2359 / DSM 70799 / NBRC 1267 / NRRL Y-1140 / WM37) (Yeast), this protein is Beta-galactosidase (LAC4).